The chain runs to 249 residues: 23S rRNA (guanosine-2'-O-)-methyltransferase RlmB (249 aa).

Positions 200, 220, and 229 each coordinate S-adenosyl-L-methionine.

It belongs to the class IV-like SAM-binding methyltransferase superfamily. RNA methyltransferase TrmH family. RlmB subfamily.

It localises to the cytoplasm. The enzyme catalyses guanosine(2251) in 23S rRNA + S-adenosyl-L-methionine = 2'-O-methylguanosine(2251) in 23S rRNA + S-adenosyl-L-homocysteine + H(+). Functionally, specifically methylates the ribose of guanosine 2251 in 23S rRNA. This is 23S rRNA (guanosine-2'-O-)-methyltransferase RlmB from Xylella fastidiosa (strain Temecula1 / ATCC 700964).